The primary structure comprises 317 residues: Melanocyte-stimulating hormone receptor (317 aa).

The Extracellular portion of the chain corresponds to M1 to E37. An N-linked (GlcNAc...) asparagine glycan is attached at N29. The chain crosses the membrane as a helical span at residues V38–I63. Topologically, residues A64–P72 are cytoplasmic. The helical transmembrane segment at M73–L93 threads the bilayer. Topologically, residues E94–N118 are extracellular. A helical transmembrane segment spans residues V119–V140. At D141–R163 the chain is on the cytoplasmic side. A helical transmembrane segment spans residues A164–Y183. Over D184–C191 the chain is Extracellular. Residues L192–L211 traverse the membrane as a helical segment. Over A212–A240 the chain is Cytoplasmic. A helical membrane pass occupies residues V241–L266. Residues C267–N279 are Extracellular-facing. The helical transmembrane segment at F280–F300 threads the bilayer. Over H301 to W317 the chain is Cytoplasmic. C315 carries the S-palmitoyl cysteine lipid modification.

This sequence belongs to the G-protein coupled receptor 1 family. In terms of assembly, interacts with MGRN1, but does not undergo MGRN1-mediated ubiquitination; this interaction competes with GNAS-binding and thus inhibits agonist-induced cAMP production. Interacts with OPN3; the interaction results in a decrease in MC1R-mediated cAMP signaling and ultimately a decrease in melanin production in melanocytes. In terms of tissue distribution, expressed in melanocytes. Expressed in corticoadrenal tissue.

Its subcellular location is the cell membrane. Its function is as follows. Receptor for MSH (alpha, beta and gamma) and ACTH. The activity of this receptor is mediated by G proteins which activate adenylate cyclase. Mediates melanogenesis, the production of eumelanin (black/brown) and phaeomelanin (red/yellow), via regulation of cAMP signaling in melanocytes. This Homo sapiens (Human) protein is Melanocyte-stimulating hormone receptor (MC1R).